The chain runs to 244 residues: Capsid protein (244 aa).

The short motif at 1 to 24 (MSTSKRKRGDDANWSKRVPKKKPS) is the Bipartite nuclear localization signal element. Positions 1–39 (MSTSKRKRGDDANWSKRVPKKKPSSAGLKRAGSKADRPS) are disordered.

This sequence belongs to the geminiviridae capsid protein family. In terms of assembly, homomultimer. Interacts with the movement protein. Binds to single-stranded and double-stranded viral DNA.

Its subcellular location is the virion. It localises to the host nucleus. In terms of biological role, encapsidates the viral genome into characteristic twinned ('geminate') particles. Binds the genomic viral ssDNA and shuttles it into and out of the cell nucleus. Plays a role in protection of the genome from degradation, virus acquisition and transmission by insect vectors, infectivity, and systemic movement. The CP of monopartite geminiviruses is absolutely essential for virus movement. The sequence is that of Capsid protein from Avena sativa (Oat).